We begin with the raw amino-acid sequence, 1420 residues long: DNA-directed RNA polymerase subunit beta' (1420 aa).

Zn(2+) is bound by residues cysteine 70, cysteine 72, cysteine 85, and cysteine 88. Aspartate 464, aspartate 466, and aspartate 468 together coordinate Mg(2+). Positions 823, 897, 904, and 907 each coordinate Zn(2+).

The protein belongs to the RNA polymerase beta' chain family. In terms of assembly, the RNAP catalytic core consists of 2 alpha, 1 beta, 1 beta' and 1 omega subunit. When a sigma factor is associated with the core the holoenzyme is formed, which can initiate transcription. Mg(2+) serves as cofactor. Zn(2+) is required as a cofactor.

The catalysed reaction is RNA(n) + a ribonucleoside 5'-triphosphate = RNA(n+1) + diphosphate. Its function is as follows. DNA-dependent RNA polymerase catalyzes the transcription of DNA into RNA using the four ribonucleoside triphosphates as substrates. The polypeptide is DNA-directed RNA polymerase subunit beta' (Polynucleobacter asymbioticus (strain DSM 18221 / CIP 109841 / QLW-P1DMWA-1) (Polynucleobacter necessarius subsp. asymbioticus)).